A 292-amino-acid chain; its full sequence is RNA polymerase II transcriptional coactivator SUB1 (292 aa).

Disordered stretches follow at residues 1–31 (MSYYNRYRNKRRSDNGGGNLSNSNNNNGGMP) and 117–292 (LLSD…SEEE). The segment covering 20-31 (LSNSNNNNGGMP) has biased composition (low complexity). S119 is modified (phosphoserine). Basic and acidic residues-rich tracts occupy residues 133–166 (NNDKDKNGKDKNSPKKRREDKSKASNESHDLEPR), 179–191 (PHEENIQNAEREA), 204–240 (KQQEERKQKEKEEAEEAKAKAVAEQEKEAKAKEKIAE), and 251–267 (AKKEDIVSNINESKDAN). S268, S269, and S289 each carry phosphoserine.

Belongs to the transcriptional coactivator PC4 family.

It is found in the nucleus. Plays a role in the release of TFIIB from the transcription complex during transcription initiation. Binds to TFIIB and specifically inhibits the formation of the TBP-TFIIB-promoter complexes. The protein is RNA polymerase II transcriptional coactivator SUB1 (SUB1) of Saccharomyces cerevisiae (strain ATCC 204508 / S288c) (Baker's yeast).